Consider the following 156-residue polypeptide: 3-dehydroquinate dehydratase (156 aa).

Y22 acts as the Proton acceptor in catalysis. The substrate site is built by N73, H79, and D86. The Proton donor role is filled by H99. Residues 100 to 101 (LS) and R110 contribute to the substrate site.

Belongs to the type-II 3-dehydroquinase family. Homododecamer.

It carries out the reaction 3-dehydroquinate = 3-dehydroshikimate + H2O. It participates in metabolic intermediate biosynthesis; chorismate biosynthesis; chorismate from D-erythrose 4-phosphate and phosphoenolpyruvate: step 3/7. Catalyzes a trans-dehydration via an enolate intermediate. The chain is 3-dehydroquinate dehydratase from Nitratiruptor sp. (strain SB155-2).